The primary structure comprises 3114 residues: Centromere protein F (3114 aa).

Residues M1 to M481 form an interaction with SNAP25 and required for localization to the cytoplasm region. Positions P13–A131 form a coiled coil. S106 carries the phosphoserine modification. A phosphothreonine mark is found at T144, T151, and T154. Residue Y158 is modified to Phosphotyrosine. Over residues Q211–T235 the composition is skewed to polar residues. Residues Q211–P236 form a disordered region. Phosphoserine occurs at positions 242 and 276. Positions L280–V685 form a coiled coil. A phosphoserine mark is found at S773, S783, S821, S834, S838, and S876. Coiled-coil stretches lie at residues V899 to E989 and L1196 to D1244. Residues S1248, S1255, and S1259 each carry the phosphoserine modification. Residues V1549 to Q1646 are a coiled coil. 3 positions are modified to phosphoserine: S1651, S1652, and S1654. Disordered stretches follow at residues R1667–V1690 and T1710–I1746. Over residues E1669–V1690 the composition is skewed to basic and acidic residues. The residue at position 1726 (S1726) is a Phosphoserine. T1862 is subject to Phosphothreonine. 2 positions are modified to phosphoserine: S1868 and S1892. Coiled coils occupy residues N1890–R2078 and L2107–Q2891. An interaction with NDE1 and NDEL1 region spans residues L2026–N2351. Repeat copies occupy residues Q2111–D2290 and I2293–S2472. The 2 X 177 AA tandem repeats stretch occupies residues Q2111 to S2472. Positions S2392–G2829 are sufficient for self-association. Residues S2392–A3017 form a sufficient for centromere localization region. A phosphoserine mark is found at S2416 and S2417. K2779 carries the N6-acetyllysine modification. Residues V2831 to A3017 are sufficient for nuclear localization. The interval Q2891–E2977 is disordered. Residues S2900, S2911, S2922, and S2936 each carry the phosphoserine modification. Positions K2919–S2936 match the Nuclear localization signal motif. Residue T2949 is modified to Phosphothreonine. A phosphoserine mark is found at S2952, S2998, S3023, and S3026. The disordered stretch occupies residues P3024–Q3114. Polar residues predominate over residues A3033–S3045. S3054, S3079, and S3083 each carry phosphoserine. Basic and acidic residues predominate over residues S3079–R3089. The span at S3105–Q3114 shows a compositional bias: polar residues. C3111 carries the post-translational modification Cysteine methyl ester. The S-farnesyl cysteine moiety is linked to residue C3111. Positions K3112 to Q3114 are cleaved as a propeptide — removed in mature form.

The protein belongs to the centromere protein F family. In terms of assembly, interacts with and STX4 (via C-terminus). Interacts (via N-terminus) with RBL1, RBL2 and SNAP25. Self-associates. Interacts with CENP-E and BUBR1 (via C-terminus). Interacts (via C-terminus) with NDE1, NDEL1 and RB1. Hyperphosphorylated during mitosis.

The protein localises to the cytoplasm. Its subcellular location is the perinuclear region. The protein resides in the nucleus matrix. It localises to the chromosome. It is found in the centromere. The protein localises to the kinetochore. Its subcellular location is the cytoskeleton. The protein resides in the spindle. Required for kinetochore function and chromosome segregation in mitosis. Required for kinetochore localization of dynein, LIS1, NDE1 and NDEL1. Regulates recycling of the plasma membrane by acting as a link between recycling vesicles and the microtubule network though its association with STX4 and SNAP25. Acts as a potential inhibitor of pocket protein-mediated cellular processes during development by regulating the activity of RB proteins during cell division and proliferation. May play a regulatory or permissive role in the normal embryonic cardiomyocyte cell cycle and in promoting continued mitosis in transformed, abnormally dividing neonatal cardiomyocytes. Interaction with RB directs embryonic stem cells toward a cardiac lineage. Involved in the regulation of DNA synthesis and hence cell cycle progression, via its C-terminus. Has a potential role regulating skeletal myogenesis and in cell differentiation in embryogenesis. Involved in dendritic cell regulation of T-cell immunity against chlamydia. The protein is Centromere protein F (CENPF) of Homo sapiens (Human).